The following is a 160-amino-acid chain: Ribosome maturation factor RimP (160 aa).

Belongs to the RimP family.

Its subcellular location is the cytoplasm. Its function is as follows. Required for maturation of 30S ribosomal subunits. This chain is Ribosome maturation factor RimP, found in Orientia tsutsugamushi (strain Boryong) (Rickettsia tsutsugamushi).